The primary structure comprises 252 residues: Delta-like protein dsl-1 (252 aa).

The signal sequence occupies residues 1 to 17; the sequence is MLKYLIFLAILISVVHS. In terms of domain architecture, DSL spans 120–164; sequence IKCNRYWHGLHCDHFCNDDFARTINRRCTQNGTLGCLEGFHGPNC. 6 cysteine pairs are disulfide-bonded: Cys-122–Cys-131, Cys-135–Cys-147, Cys-155–Cys-164, Cys-173–Cys-181, Cys-175–Cys-197, and Cys-199–Cys-209. An EGF-like domain is found at 169–210; that stretch reads PADSCKCQNGGKCVSSLENTWAQNGSLICECRLGHFEGKHCE.

As to quaternary structure, may interact with lin-12/Notch receptor.

Its subcellular location is the secreted. Functionally, probable secreted Notch ligand involved in the mediation of Notch signaling. Involved in the lin-12/Notch pathway-mediated signaling of cell fate in vulval precursor cells (VPCs), acting redundantly with lag-2, apx-1 and osm-11. May also be involved in glp-1/Notch signaling. This Caenorhabditis elegans protein is Delta-like protein dsl-1.